The chain runs to 414 residues: WW domain-containing oxidoreductase (414 aa).

Residues 1–23 (MAALKYAGLEDTDSEEELPPGWE) are disordered. The WW 1 domain occupies 16–49 (EELPPGWEERTTKDGWVYYANHLEEKTQWEHPKS). The Nuclear localization signal motif lies at 50–55 (GKRKRV). One can recognise a WW 2 domain in the interval 57–90 (GGLPYGWEQETDENGQVYFVDHINKRTTYLDPRL). Position 131 to 137 (131 to 137 (GANSGIG)) interacts with NADP(+). S260 serves as a coordination point for substrate. Y293 serves as the catalytic Proton acceptor.

This sequence belongs to the short-chain dehydrogenases/reductases (SDR) family.

It localises to the cytoplasm. It is found in the mitochondrion. The protein resides in the golgi apparatus. Its subcellular location is the lysosome. Putative oxidoreductase. Acts as a tumor suppressor and plays a role in apoptosis. May function synergistically with p53/TP53 to control genotoxic stress-induced cell death. Plays a role in TGFB1 signaling and TGFB1-mediated cell death. May also play a role in tumor necrosis factor (TNF)-mediated cell death. Required for normal bone development. Inhibits Wnt signaling. The polypeptide is WW domain-containing oxidoreductase (WWOX) (Gallus gallus (Chicken)).